The following is a 267-amino-acid chain: Indole-3-glycerol phosphate synthase 1 (267 aa).

The protein belongs to the TrpC family.

It carries out the reaction 1-(2-carboxyphenylamino)-1-deoxy-D-ribulose 5-phosphate + H(+) = (1S,2R)-1-C-(indol-3-yl)glycerol 3-phosphate + CO2 + H2O. It participates in amino-acid biosynthesis; L-tryptophan biosynthesis; L-tryptophan from chorismate: step 4/5. This is Indole-3-glycerol phosphate synthase 1 (trpC1) from Ralstonia nicotianae (strain ATCC BAA-1114 / GMI1000) (Ralstonia solanacearum).